Here is a 243-residue protein sequence, read N- to C-terminus: ATP synthase subunit a (243 aa).

Transmembrane regions (helical) follow at residues N29–L49, I54–I74, V89–F109, H114–F134, I144–F164, I182–L202, and A208–F228.

The protein belongs to the ATPase A chain family. In terms of assembly, F-type ATPases have 2 components, CF(1) - the catalytic core - and CF(0) - the membrane proton channel. CF(1) has five subunits: alpha(3), beta(3), gamma(1), delta(1), epsilon(1). CF(0) has three main subunits: a(1), b(2) and c(9-12). The alpha and beta chains form an alternating ring which encloses part of the gamma chain. CF(1) is attached to CF(0) by a central stalk formed by the gamma and epsilon chains, while a peripheral stalk is formed by the delta and b chains.

It localises to the cell inner membrane. In terms of biological role, key component of the proton channel; it plays a direct role in the translocation of protons across the membrane. This is ATP synthase subunit a from Ehrlichia chaffeensis (strain ATCC CRL-10679 / Arkansas).